The primary structure comprises 527 residues: Optineurin (527 aa).

Disordered stretches follow at residues 1–32 (MSHQPLSCLTEKEDSPTESTGNGPPYLAHPNL) and 101–143 (SHEN…KDQL). The stretch at 38 to 170 (EELLQQMKEL…VSELQLKLNS (133 aa)) forms a coiled coil. An interaction with Rab8 region spans residues 58–209 (MKLNNQAMKG…GPTRTVSTSR (152 aa)). The LIR signature appears at 176–181 (DSFVEI). S177 is modified (phosphoserine; by TBK1). The segment covering 186 to 197 (GEAEGSVKEIKH) has biased composition (basic and acidic residues). 2 disordered regions span residues 186–214 (GEAEGSVKEIKHSPGPTRTVSTSRALSKY) and 262–292 (SDFEKKASNRSEIETQTEGSTEKENDEEKGL). At S198 the chain carries Phosphoserine. The segment covering 201–210 (PTRTVSTSRA) has biased composition (polar residues). Residues 239-458 (CLREGNQKVE…LLKENDAFED (220 aa)) are a coiled coil. Basic and acidic residues-rich tracts occupy residues 262-274 (SDFEKKASNRSEI) and 281-292 (STEKENDEEKGL). Positions 361 to 527 (TRKESEKVDR…LQIHVMDCII (167 aa)) are interaction with HD. The tract at residues 362-470 (RKESEKVDRA…RQSLMEMQSR (109 aa)) is interaction with MYO6. Positions 424-429 (DFHAER) match the UBAN motif. Phosphoserine is present on S476. Residues 497–527 (QRNIPIHSCPKCGEVLPDIDTLQIHVMDCII) form a CCHC NOA-type zinc finger. Zn(2+) is bound by residues C505, C508, H521, and C525.

In terms of assembly, self-associates. Interacts with HD. Interacts with GTF3A. Interacts with MYO6. Interacts (via UBAN) with ubiquitinated TFRC. Interacts with GTP-bound Rab8 (RAB8A and/or RAB8B). Interacts with TBC1D17. Interacts with TBK1. Interacts with TRAF3. Binds to linear ubiquitin chains. Interacts with LC3 family members MAP1LC3A, MAP1LC3B, GABARAP, GABARAPL1 and GABARAPL2; OPTN phosphorylation increases the association (at least with MAP1LC3B). Interacts with RAB12; the interaction may be indirect. Interacts with TBK1; this interaction leads to the Golgi localization of TBK1 and its subsequent activation. Interacts with palmitoyltransferase ZDHHC17/HIP14; the interaction does not lead to palmitoylation of OPTN. Interacts with CYLD. Interacts with TOM1; the interaction is indirect and is mediated by MYO6, which acts as a bridge between TOM1 and OPTN. Interacts with USP12; the interaction is independent of USP12 deubiquitinase activity and may be involved in regulation of autophagic flux. In terms of processing, phosphorylated by TBK1, leading to restrict bacterial proliferation in case of infection.

The protein localises to the cytoplasm. It localises to the perinuclear region. It is found in the golgi apparatus. The protein resides in the trans-Golgi network. Its subcellular location is the cytoplasmic vesicle. The protein localises to the autophagosome. It localises to the recycling endosome. Functionally, plays an important role in the maintenance of the Golgi complex, in membrane trafficking, in exocytosis, through its interaction with myosin VI and Rab8. Links myosin VI to the Golgi complex and plays an important role in Golgi ribbon formation. Negatively regulates the induction of IFNB in response to RNA virus infection. Plays a neuroprotective role in the eye and optic nerve. Probably part of the TNF-alpha signaling pathway that can shift the equilibrium toward induction of cell death. May act by regulating membrane trafficking and cellular morphogenesis via a complex that contains Rab8 and huntingtin (HD). Mediates the interaction of Rab8 with the probable GTPase-activating protein TBC1D17 during Rab8-mediated endocytic trafficking, such as that of transferrin receptor (TFRC/TfR); regulates Rab8 recruitment to tubules emanating from the endocytic recycling compartment. Autophagy receptor that interacts directly with both the cargo to become degraded and an autophagy modifier of the MAP1 LC3 family; targets ubiquitin-coated bacteria (xenophagy) and appears to function in the same pathway as SQSTM1 and CALCOCO2/NDP52. The chain is Optineurin (OPTN) from Pongo abelii (Sumatran orangutan).